A 353-amino-acid polypeptide reads, in one-letter code: T-complex protein 1 subunit eta (353 aa).

It belongs to the TCP-1 chaperonin family. Heterooligomeric complex of about 850 to 900 kDa that forms two stacked rings, 12 to 16 nm in diameter.

It localises to the cytoplasm. Molecular chaperone; assists the folding of proteins upon ATP hydrolysis. Known to play a role, in vitro, in the folding of actin and tubulin. In Tetrahymena thermophila, this protein is T-complex protein 1 subunit eta.